We begin with the raw amino-acid sequence, 199 residues long: Putative peroxiredoxin ycf42 (199 aa).

The region spanning Leu-8 to Tyr-165 is the Thioredoxin domain. Cys-53 acts as the Cysteine sulfenic acid (-SOH) intermediate in catalysis.

The protein belongs to the peroxiredoxin family. AhpC/Prx1 subfamily. Homodimer; disulfide-linked, upon oxidation. Post-translationally, the Cys-53-SH group is the primary site of oxidation by H(2)O(2), and the oxidized Cys-53 (probably Cys-SOH) rapidly reacts with Cys-174-SH of the other subunit to form an intermolecular disulfide. This disulfide is subsequently reduced by thioredoxin.

It localises to the plastid. The protein localises to the chloroplast. The enzyme catalyses a hydroperoxide + [thioredoxin]-dithiol = an alcohol + [thioredoxin]-disulfide + H2O. Its function is as follows. Thiol-specific peroxidase that catalyzes the reduction of hydrogen peroxide and organic hydroperoxides to water and alcohols, respectively. Plays a role in cell protection against oxidative stress by detoxifying peroxides. The chain is Putative peroxiredoxin ycf42 (ycf42) from Porphyra purpurea (Red seaweed).